We begin with the raw amino-acid sequence, 248 residues long: ATP synthase subunit a (248 aa).

Transmembrane regions (helical) follow at residues 29–49 (AMLTTCVSLSFFLFLFYCLFS), 85–105 (VFPFLFVIFSFILISNVQGLV), 115–135 (LIQTMVLALTVFIGVIIIVLA), 143–163 (LFLPGGTSIVLAFLLVPIEIV), 176–196 (LFANMMAGHTLLKVIAAVAWA), 201–221 (GGLLLIAHIVPLGVLVILFGL), and 227–247 (LIQAYVFTILSCIYINDAIVL).

Belongs to the ATPase A chain family. As to quaternary structure, F-type ATPases have 2 components, CF(1) - the catalytic core - and CF(0) - the membrane proton channel. CF(1) has five subunits: alpha(3), beta(3), gamma(1), delta(1), epsilon(1). CF(0) has three main subunits: a, b and c.

Its subcellular location is the mitochondrion inner membrane. Mitochondrial membrane ATP synthase (F(1)F(0) ATP synthase or Complex V) produces ATP from ADP in the presence of a proton gradient across the membrane which is generated by electron transport complexes of the respiratory chain. F-type ATPases consist of two structural domains, F(1) - containing the extramembraneous catalytic core and F(0) - containing the membrane proton channel, linked together by a central stalk and a peripheral stalk. During catalysis, ATP synthesis in the catalytic domain of F(1) is coupled via a rotary mechanism of the central stalk subunits to proton translocation. Key component of the proton channel; it may play a direct role in the translocation of protons across the membrane. The protein is ATP synthase subunit a (ATP6) of Pylaiella littoralis (Seaweed).